A 493-amino-acid polypeptide reads, in one-letter code: Mitochondrial distribution and morphology protein 10 (493 aa).

The protein belongs to the MDM10 family. Component of the ER-mitochondria encounter structure (ERMES) or MDM complex, composed of MMM1, MDM10, MDM12 and MDM34. Associates with the mitochondrial outer membrane sorting assembly machinery SAM(core) complex, which consists of SAM35, SAM37 and SAM50, to form a SAM(holo) complex.

The protein resides in the mitochondrion outer membrane. Component of the ERMES/MDM complex, which serves as a molecular tether to connect the endoplasmic reticulum and mitochondria. Components of this complex are involved in the control of mitochondrial shape and protein biogenesis and may function in phospholipid exchange. MDM10 is involved in the late assembly steps of the general translocase of the mitochondrial outer membrane (TOM complex). Functions in the TOM40-specific route of the assembly of outer membrane beta-barrel proteins, including the association of TOM40 with the receptor TOM22 and small TOM proteins. Can associate with the SAM(core) complex as well as the MDM12-MMM1 complex, both involved in late steps of the major beta-barrel assembly pathway, that is responsible for biogenesis of all outer membrane beta-barrel proteins. May act as a switch that shuttles between both complexes and channels precursor proteins into the TOM40-specific pathway. Plays a role in mitochondrial morphology and in the inheritance of mitochondria. The chain is Mitochondrial distribution and morphology protein 10 from Saccharomyces cerevisiae (strain YJM789) (Baker's yeast).